The following is a 540-amino-acid chain: Transcription initiation factor IIF subunit alpha (540 aa).

Residues Met1–Glu26 show a composition bias toward basic and acidic residues. 2 disordered regions span residues Met1 to Gln39 and Ile70 to Asn106. 2 stretches are compositionally biased toward polar residues: residues Ser29 to Gln39 and Ala89 to Asn106. Residues Ser259 and Ser261 each carry the phosphoserine modification. Positions Met280–Ser382 form a coiled coil. The tract at residues Tyr341–Ser416 is disordered. Positions Ser359–Glu369 are enriched in acidic residues. A compositionally biased stretch (polar residues) spans Phe381–Ser416. Ser399 is subject to Phosphoserine.

This sequence belongs to the TFIIF alpha subunit family. As to quaternary structure, component of the fcp1/TFIIF/polII complex via interaction of tfg3 with both tfg1/TFIIF-alpha and tfg2/TFIIF-beta subunits.

It is found in the nucleus. In terms of biological role, TFIIF is a general transcription initiation factor that binds to RNA polymerase II and helps to recruit it to the initiation complex in collaboration with TFIIB. It promotes transcription elongation. The chain is Transcription initiation factor IIF subunit alpha (tfg1) from Schizosaccharomyces pombe (strain 972 / ATCC 24843) (Fission yeast).